Reading from the N-terminus, the 158-residue chain is 6,7-dimethyl-8-ribityllumazine synthase (158 aa).

5-amino-6-(D-ribitylamino)uracil is bound by residues phenylalanine 23, 61–63 (SFE), and 85–87 (AVI). 90-91 (ET) contributes to the (2S)-2-hydroxy-3-oxobutyl phosphate binding site. Histidine 93 serves as the catalytic Proton donor. Phenylalanine 118 provides a ligand contact to 5-amino-6-(D-ribitylamino)uracil. (2S)-2-hydroxy-3-oxobutyl phosphate is bound at residue arginine 132.

The protein belongs to the DMRL synthase family.

The enzyme catalyses (2S)-2-hydroxy-3-oxobutyl phosphate + 5-amino-6-(D-ribitylamino)uracil = 6,7-dimethyl-8-(1-D-ribityl)lumazine + phosphate + 2 H2O + H(+). The protein operates within cofactor biosynthesis; riboflavin biosynthesis; riboflavin from 2-hydroxy-3-oxobutyl phosphate and 5-amino-6-(D-ribitylamino)uracil: step 1/2. Its function is as follows. Catalyzes the formation of 6,7-dimethyl-8-ribityllumazine by condensation of 5-amino-6-(D-ribitylamino)uracil with 3,4-dihydroxy-2-butanone 4-phosphate. This is the penultimate step in the biosynthesis of riboflavin. The polypeptide is 6,7-dimethyl-8-ribityllumazine synthase (Prochlorococcus marinus (strain MIT 9515)).